The primary structure comprises 206 residues: Cytochrome c biogenesis ATP-binding export protein CcmA (206 aa).

An ABC transporter domain is found at 4–205; that stretch reads LEGIDLTCIR…AGAAIQRLQL (202 aa). 36–43 contacts ATP; sequence GPNGSGKT.

The protein belongs to the ABC transporter superfamily. CcmA exporter (TC 3.A.1.107) family. In terms of assembly, the complex is composed of two ATP-binding proteins (CcmA) and two transmembrane proteins (CcmB).

Its subcellular location is the cell inner membrane. The enzyme catalyses heme b(in) + ATP + H2O = heme b(out) + ADP + phosphate + H(+). In terms of biological role, part of the ABC transporter complex CcmAB involved in the biogenesis of c-type cytochromes; once thought to export heme, this seems not to be the case, but its exact role is uncertain. Responsible for energy coupling to the transport system. The sequence is that of Cytochrome c biogenesis ATP-binding export protein CcmA from Nitrosospira multiformis (strain ATCC 25196 / NCIMB 11849 / C 71).